A 248-amino-acid polypeptide reads, in one-letter code: Homeobox protein Hox-A4 (248 aa).

The disordered stretch occupies residues Y23 to S107. Basic and acidic residues predominate over residues Y35–S51. The Antp-type hexapeptide motif lies at V128–K133. Positions P149–H208 form a DNA-binding region, homeobox. The tract at residues E207–L248 is disordered. Positions S217–Q238 are enriched in low complexity.

Belongs to the Antp homeobox family. Deformed subfamily.

It is found in the nucleus. Functionally, sequence-specific transcription factor which is part of a developmental regulatory system that provides cells with specific positional identities on the anterior-posterior axis. This is Homeobox protein Hox-A4 (hoxa4) from Morone saxatilis (Striped bass).